We begin with the raw amino-acid sequence, 218 residues long: CTP-dependent diacylglycerol kinase 1 (218 aa).

Residues 1–19 are Lumenal-facing; it reads MSTKLTWSQWSKKHEIPRK. The chain crosses the membrane as a helical span at residues 20-37; that stretch reads ALHTSIGFFALLLQGCGY. Position 38 (His38) is a topological domain, cytoplasmic. The chain crosses the membrane as a helical span at residues 39 to 59; it reads AAQIIPVIEIGFIPAFTGDVI. Topologically, residues 60–88 are lumenal; sequence RFNWPAFSRLYNRVIGPLMRESEKNAWNG. A helical membrane pass occupies residues 89–109; it reads VIFYMIGVWIVLKVFPEEIAV. Residues 110-142 lie on the Cytoplasmic side of the membrane; that stretch reads MSVLLLSWCDTTASTVGRKWGKYTPKIAKNKSL. Residues 143-163 traverse the membrane as a helical segment; that stretch reads AGSLGAFVCGVFCCYVYWGLF. At 164-179 the chain is on the lumenal side; sequence RTGPDSLAAQSRIPFP. 2 consecutive transmembrane segments (helical) span residues 180-200 and 201-217; these read WLCL…VWGL and DDNL…LYLI. Residue Met218 is a topological domain, lumenal.

The protein belongs to the DGK1 family. Ca(2+) is required as a cofactor. The cofactor is Mg(2+).

It is found in the endoplasmic reticulum membrane. The protein localises to the nucleus membrane. The enzyme catalyses a 1,2-diacyl-sn-glycerol + CTP = a 1,2-diacyl-sn-glycero-3-phosphate + CDP + H(+). Its function is as follows. CTP-dependent diacylglycerol kinase that catalyzes the phosphorylation of diacylglycerol (DAG) to phosphatidate (PA). Controls phosphatidate levels at the nuclear envelope. Counteracts the activity of PA phosphatase ned1. May be involved in vesicle trafficking between the endoplasmic reticulum and the Golgi apparatus. Involved in pre-tRNA splicing. The chain is CTP-dependent diacylglycerol kinase 1 (ptp4) from Schizosaccharomyces pombe (strain 972 / ATCC 24843) (Fission yeast).